The sequence spans 244 residues: Protein crossbronx (244 aa).

The region spanning 20 to 176 is the UBC core domain; sequence QQEYKILAEY…VQENIKESKE (157 aa). The disordered stretch occupies residues 209–244; that stretch reads AGRSKQTEPSAQQGNGGHATGLSWVKEGEFKPLSIE.

It belongs to the ubiquitin-conjugating enzyme family. FTS subfamily.

This is Protein crossbronx (cbx) from Drosophila sechellia (Fruit fly).